We begin with the raw amino-acid sequence, 417 residues long: NADH-quinone oxidoreductase subunit D 2 (417 aa).

Belongs to the complex I 49 kDa subunit family. NDH-1 is composed of 14 different subunits. Subunits NuoB, C, D, E, F, and G constitute the peripheral sector of the complex.

Its subcellular location is the cell membrane. The enzyme catalyses a quinone + NADH + 5 H(+)(in) = a quinol + NAD(+) + 4 H(+)(out). NDH-1 shuttles electrons from NADH, via FMN and iron-sulfur (Fe-S) centers, to quinones in the respiratory chain. The immediate electron acceptor for the enzyme in this species is believed to be ubiquinone. Couples the redox reaction to proton translocation (for every two electrons transferred, four hydrogen ions are translocated across the cytoplasmic membrane), and thus conserves the redox energy in a proton gradient. The chain is NADH-quinone oxidoreductase subunit D 2 from Roseiflexus sp. (strain RS-1).